The chain runs to 319 residues: Taste receptor type 2 member 30 (319 aa).

Met-1 is a topological domain (extracellular). The helical transmembrane segment at Ile-2–Phe-22 threads the bilayer. Over Ala-23 to Gln-46 the chain is Cytoplasmic. The chain crosses the membrane as a helical span at residues Ile-47 to Tyr-67. Topologically, residues Ala-68 to Asn-86 are extracellular. The helical transmembrane segment at Val-87–Leu-107 threads the bilayer. The Cytoplasmic segment spans residues Leu-108–Lys-126. The chain crosses the membrane as a helical span at residues Ser-127–Ile-147. Over Asn-148 to Thr-178 the chain is Extracellular. N-linked (GlcNAc...) asparagine glycosylation is found at Asn-161 and Asn-176. A helical transmembrane segment spans residues Leu-179–Ile-199. The Cytoplasmic segment spans residues Cys-200–Gln-229. Residues Thr-230 to Cys-250 traverse the membrane as a helical segment. The Extracellular segment spans residues Asn-251–Pro-259. Residues Val-260–Ile-280 form a helical membrane-spanning segment. At Leu-281–Gly-319 the chain is on the cytoplasmic side.

It belongs to the G-protein coupled receptor T2R family.

It localises to the membrane. Its function is as follows. Receptor that may play a role in the perception of bitterness and is gustducin-linked. May play a role in sensing the chemical composition of the gastrointestinal content. The activity of this receptor may stimulate alpha gustducin, mediate PLC-beta-2 activation and lead to the gating of TRPM5. The chain is Taste receptor type 2 member 30 (TAS2R30) from Pan troglodytes (Chimpanzee).